We begin with the raw amino-acid sequence, 1126 residues long: Carbamoyl phosphate synthase large chain (1126 aa).

Positions M1 to D402 are carboxyphosphate synthetic domain. Residues R129, R169, G175, G176, E208, I210, E215, G241, V242, H243, Q285, and E299 each contribute to the ATP site. Positions K133–L328 constitute an ATP-grasp 1 domain. Residues Q285, E299, and N301 each contribute to the Mg(2+) site. Positions 285, 299, and 301 each coordinate Mn(2+). Positions K403–T551 are oligomerization domain. The interval E552–Y962 is carbamoyl phosphate synthetic domain. Residues G681–V881 form the ATP-grasp 2 domain. 10 residues coordinate ATP: R717, K765, L767, E772, G797, V798, H799, S800, Q840, and E852. The Mg(2+) site is built by Q840, E852, and N854. Mn(2+) is bound by residues Q840, E852, and N854. The segment at E963–D1126 is allosteric domain. Residues G964–D1126 enclose the MGS-like domain.

It belongs to the CarB family. As to quaternary structure, composed of two chains; the small (or glutamine) chain promotes the hydrolysis of glutamine to ammonia, which is used by the large (or ammonia) chain to synthesize carbamoyl phosphate. Tetramer of heterodimers (alpha,beta)4. The cofactor is Mg(2+). It depends on Mn(2+) as a cofactor.

The catalysed reaction is hydrogencarbonate + L-glutamine + 2 ATP + H2O = carbamoyl phosphate + L-glutamate + 2 ADP + phosphate + 2 H(+). It catalyses the reaction hydrogencarbonate + NH4(+) + 2 ATP = carbamoyl phosphate + 2 ADP + phosphate + 2 H(+). It functions in the pathway amino-acid biosynthesis; L-arginine biosynthesis; carbamoyl phosphate from bicarbonate: step 1/1. Its pathway is pyrimidine metabolism; UMP biosynthesis via de novo pathway; (S)-dihydroorotate from bicarbonate: step 1/3. In terms of biological role, large subunit of the glutamine-dependent carbamoyl phosphate synthetase (CPSase). CPSase catalyzes the formation of carbamoyl phosphate from the ammonia moiety of glutamine, carbonate, and phosphate donated by ATP, constituting the first step of 2 biosynthetic pathways, one leading to arginine and/or urea and the other to pyrimidine nucleotides. The large subunit (synthetase) binds the substrates ammonia (free or transferred from glutamine from the small subunit), hydrogencarbonate and ATP and carries out an ATP-coupled ligase reaction, activating hydrogencarbonate by forming carboxy phosphate which reacts with ammonia to form carbamoyl phosphate. The sequence is that of Carbamoyl phosphate synthase large chain from Bifidobacterium adolescentis (strain ATCC 15703 / DSM 20083 / NCTC 11814 / E194a).